An 846-amino-acid polypeptide reads, in one-letter code: Translation initiation factor IF-2 (846 aa).

A disordered region spans residues 198–219; that stretch reads YKREEEEKKSKAKKAGGKGFKK. Residues 207–219 are compositionally biased toward basic residues; that stretch reads SKAKKAGGKGFKK. One can recognise a tr-type G domain in the interval 345–512; it reads SRAPVVTIMG…AVLLQSEVLE (168 aa). The segment at 354–361 is G1; sequence GHVDHGKT. 354-361 serves as a coordination point for GTP; sequence GHVDHGKT. Residues 379–383 are G2; it reads GITQH. The G3 stretch occupies residues 400–403; sequence DTPG. Residues 400 to 404 and 454 to 457 contribute to the GTP site; these read DTPGH and NKID. Residues 454–457 are G4; that stretch reads NKID. Positions 490–492 are G5; sequence SAK.

It belongs to the TRAFAC class translation factor GTPase superfamily. Classic translation factor GTPase family. IF-2 subfamily.

It localises to the cytoplasm. In terms of biological role, one of the essential components for the initiation of protein synthesis. Protects formylmethionyl-tRNA from spontaneous hydrolysis and promotes its binding to the 30S ribosomal subunits. Also involved in the hydrolysis of GTP during the formation of the 70S ribosomal complex. In Francisella tularensis subsp. holarctica (strain OSU18), this protein is Translation initiation factor IF-2.